The chain runs to 552 residues: FERRY endosomal RAB5 effector complex subunit 3 (552 aa).

Ser-79 is subject to Phosphoserine.

As to quaternary structure, component of the FERRY complex composed of five subunits, TBCK, PPP1R21, FERRY3, CRYZL1 and GATD1 with a ratio of 1:2:1:2:4, respectively.

Its subcellular location is the cytoplasm. It is found in the early endosome. In terms of biological role, component of the FERRY complex (Five-subunit Endosomal Rab5 and RNA/ribosome intermediary). The FERRY complex directly interacts with mRNAs and RAB5A, and functions as a RAB5A effector involved in the localization and the distribution of specific mRNAs most likely by mediating their endosomal transport. The complex recruits mRNAs and ribosomes to early endosomes through direct mRNA-interaction. Plays a role in mast cell degranulation. This Rattus norvegicus (Rat) protein is FERRY endosomal RAB5 effector complex subunit 3.